The chain runs to 115 residues: Small ribosomal subunit protein uS17 (115 aa).

It belongs to the universal ribosomal protein uS17 family. As to quaternary structure, part of the 30S ribosomal subunit.

Functionally, one of the primary rRNA binding proteins, it binds specifically to the 5'-end of 16S ribosomal RNA. This is Small ribosomal subunit protein uS17 from Granulibacter bethesdensis (strain ATCC BAA-1260 / CGDNIH1).